The following is a 430-amino-acid chain: Adenylosuccinate synthetase (430 aa).

Residues 13 to 19 (GDEGKGK) and 41 to 43 (GHT) contribute to the GTP site. Asp14 acts as the Proton acceptor in catalysis. Mg(2+) is bound by residues Asp14 and Gly41. Residues 14–17 (DEGK), 39–42 (NAGH), Thr130, Arg144, Gln225, Thr240, and Arg304 each bind IMP. His42 functions as the Proton donor in the catalytic mechanism. 300–306 (ATTGRAR) contacts substrate. Residues Arg306, 332–334 (KLD), and 414–416 (STG) each bind GTP.

It belongs to the adenylosuccinate synthetase family. Homodimer. The cofactor is Mg(2+).

It localises to the cytoplasm. It catalyses the reaction IMP + L-aspartate + GTP = N(6)-(1,2-dicarboxyethyl)-AMP + GDP + phosphate + 2 H(+). Its pathway is purine metabolism; AMP biosynthesis via de novo pathway; AMP from IMP: step 1/2. Its function is as follows. Plays an important role in the de novo pathway of purine nucleotide biosynthesis. Catalyzes the first committed step in the biosynthesis of AMP from IMP. The chain is Adenylosuccinate synthetase from Pseudomonas fluorescens (strain ATCC BAA-477 / NRRL B-23932 / Pf-5).